Consider the following 363-residue polypeptide: Ribosomal RNA large subunit methyltransferase M (363 aa).

Residues S190, 223 to 226 (CPGG), D242, D262, and D279 each bind S-adenosyl-L-methionine. The active-site Proton acceptor is the K308.

It belongs to the class I-like SAM-binding methyltransferase superfamily. RNA methyltransferase RlmE family. RlmM subfamily. As to quaternary structure, monomer.

The protein localises to the cytoplasm. It carries out the reaction cytidine(2498) in 23S rRNA + S-adenosyl-L-methionine = 2'-O-methylcytidine(2498) in 23S rRNA + S-adenosyl-L-homocysteine + H(+). Catalyzes the 2'-O-methylation at nucleotide C2498 in 23S rRNA. The protein is Ribosomal RNA large subunit methyltransferase M of Vibrio vulnificus (strain CMCP6).